Consider the following 547-residue polypeptide: Chaperonin GroEL (547 aa).

ATP is bound by residues 30–33 (TLGP), Lys-51, 87–91 (DGTTT), Gly-415, and Asp-495.

It belongs to the chaperonin (HSP60) family. In terms of assembly, forms a cylinder of 14 subunits composed of two heptameric rings stacked back-to-back. Interacts with the co-chaperonin GroES.

The protein localises to the cytoplasm. The catalysed reaction is ATP + H2O + a folded polypeptide = ADP + phosphate + an unfolded polypeptide.. Its function is as follows. Together with its co-chaperonin GroES, plays an essential role in assisting protein folding. The GroEL-GroES system forms a nano-cage that allows encapsulation of the non-native substrate proteins and provides a physical environment optimized to promote and accelerate protein folding. The polypeptide is Chaperonin GroEL (Aggregatibacter actinomycetemcomitans (Actinobacillus actinomycetemcomitans)).